A 359-amino-acid chain; its full sequence is Ribosomal RNA small subunit methyltransferase mra1 (359 aa).

Residues 1 to 10 show a composition bias toward basic residues; it reads MPTYSKRKSR. 2 disordered regions span residues 1-62 and 98-118; these read MPTY…EDEE and VKSDEEKEDPNGASSKTVKAR. S12 bears the Phosphoserine mark. The segment covering 18–39 has biased composition (polar residues); the sequence is KTNQPKFIKRSQSSETITSGET. A Phosphothreonine modification is found at T33. S100 is subject to Phosphoserine. Residues L287, G314, 319 to 321, and 334 to 339 each bind S-adenosyl-L-methionine; these read GPD and ISDYPL.

This sequence belongs to the class IV-like SAM-binding methyltransferase superfamily. RNA methyltransferase NEP1 family. Homodimer.

It localises to the nucleus. Its subcellular location is the nucleolus. The catalysed reaction is a pseudouridine in rRNA + S-adenosyl-L-methionine = an N(1)-methylpseudouridine in rRNA + S-adenosyl-L-homocysteine + H(+). S-adenosyl-L-methionine-dependent pseudouridine N(1)-methyltransferase that methylates the pseudouridine corresponding to position 1189 (Psi1189) in S.cerevisiae 18S rRNA. Involved the biosynthesis of the hypermodified N1-methyl-N3-(3-amino-3-carboxypropyl) pseudouridine (m1acp3-Psi) conserved in eukaryotic 18S rRNA. Also has an essential role in 40S ribosomal subunit biogenesis independent on its methyltransferase activity, facilitating the incorporation of ribosomal protein S19 during the formation of pre-ribosomes. Essential for cell growth. It also has a key role in promoting the mating function. This chain is Ribosomal RNA small subunit methyltransferase mra1, found in Schizosaccharomyces pombe (strain 972 / ATCC 24843) (Fission yeast).